The primary structure comprises 251 residues: Azurocidin (251 aa).

A signal peptide spans 1-19; the sequence is MTRLTVLALLAGLLASSRA. A propeptide spans 20 to 26 (removed in mature form); the sequence is GSSPLLD. The propeptide at 25–26 is dipeptide found in non-mature form; that stretch reads LD. The Peptidase S1 domain occupies 27–244; sequence IVGGRKARPR…FRDWIDGVLN (218 aa). The possesses antibiotic activity stretch occupies residues 46–70; sequence NQGRHFCGGALIHARFVMTAASCFQ. A disulfide bond links cysteine 52 and cysteine 68. Asparagine 126 carries N-linked (GlcNAc...) asparagine; partial glycosylation. Asparagine 140 is a glycosylation site (N-linked (GlcNAc...) asparagine). Intrachain disulfides connect cysteine 149–cysteine 207, cysteine 180–cysteine 186, and cysteine 197–cysteine 222. Asparagine 171 carries N-linked (GlcNAc...) asparagine; partial glycosylation. Residues 249–251 constitute a propeptide, removed in mature form; the sequence is GPA.

The protein belongs to the peptidase S1 family. Elastase subfamily. Cleavage of the N-terminal propeptide which is composed of 7 amino acids occurs in two steps. The initial cleavage of 5 amino acids is followed by the cleavage of a dipeptide to produce the mature form.

It localises to the cytoplasmic granule membrane. This is a neutrophil granule-derived antibacterial and monocyte- and fibroblast-specific chemotactic glycoprotein. Binds heparin. The cytotoxic action is limited to many species of Gram-negative bacteria; this specificity may be explained by a strong affinity of the very basic N-terminal half for the negatively charged lipopolysaccharides that are unique to the Gram-negative bacterial outer envelope. It may play a role in mediating recruitment of monocytes in the second wave of inflammation. Has antibacterial activity against the Gram-negative bacterium P.aeruginosa, this activity is inhibited by LPS from P.aeruginosa. Acting alone, it does not have antimicrobial activity against the Gram-negative bacteria A.actinomycetemcomitans ATCC 29532, A.actinomycetemcomitans NCTC 9709, A.actinomycetemcomitans FDC-Y4, H.aphrophilus ATCC 13252, E.corrodens ATCC 23834, C.sputigena ATCC 33123, Capnocytophaga sp ATCC 33124, Capnocytophaga sp ATCC 27872 or E.coli ML-35. Has antibacterial activity against C.sputigena ATCC 33123 when acting synergistically with either elastase or cathepsin G. The polypeptide is Azurocidin (Homo sapiens (Human)).